A 164-amino-acid chain; its full sequence is ATP synthase subunit b (164 aa).

The chain crosses the membrane as a helical span at residues Ile-4–Leu-24.

Belongs to the ATPase B chain family. As to quaternary structure, F-type ATPases have 2 components, F(1) - the catalytic core - and F(0) - the membrane proton channel. F(1) has five subunits: alpha(3), beta(3), gamma(1), delta(1), epsilon(1). F(0) has three main subunits: a(1), b(2) and c(10-14). The alpha and beta chains form an alternating ring which encloses part of the gamma chain. F(1) is attached to F(0) by a central stalk formed by the gamma and epsilon chains, while a peripheral stalk is formed by the delta and b chains.

Its subcellular location is the cell membrane. F(1)F(0) ATP synthase produces ATP from ADP in the presence of a proton or sodium gradient. F-type ATPases consist of two structural domains, F(1) containing the extramembraneous catalytic core and F(0) containing the membrane proton channel, linked together by a central stalk and a peripheral stalk. During catalysis, ATP synthesis in the catalytic domain of F(1) is coupled via a rotary mechanism of the central stalk subunits to proton translocation. Its function is as follows. Component of the F(0) channel, it forms part of the peripheral stalk, linking F(1) to F(0). The sequence is that of ATP synthase subunit b from Desulfitobacterium hafniense (strain Y51).